The primary structure comprises 368 residues: Ankyrin repeat domain-containing protein 40 (368 aa).

Position 1 is an N-acetylmethionine (Met1). ANK repeat units follow at residues 9 to 38 (EQQERLREAAALGDIREVQKLVESGVDVNS) and 43 to 72 (NGWTCLHWACKRNHGQVVSYLLKSGADKEI). Disordered stretches follow at residues 93 to 115 (MGVEEEDDDDDDDDNLPQLKKES), 139 to 176 (DSAQMQNGGPSTPPASPPADGSPPLLPPGEPPLLGTFP), and 196 to 238 (ILRT…NGTY). Positions 95 to 107 (VEEEDDDDDDDDN) are enriched in acidic residues. The span at 149–169 (STPPASPPADGSPPLLPPGEP) shows a compositional bias: pro residues. Residues 212–224 (PVSQSRSLFSSVP) are compositionally biased toward polar residues.

The protein is Ankyrin repeat domain-containing protein 40 (ANKRD40) of Homo sapiens (Human).